The sequence spans 92 residues: Defensin Lucifensin (92 aa).

Residues 1 to 23 (MKFFMVFAVTFCLALSFVSQSLA) form the signal peptide. The propeptide occupies 24-52 (LPADDEAHFVDGLEALKTIEPELHGRYKR). Intrachain disulfides connect Cys55–Cys82, Cys68–Cys88, and Cys72–Cys90.

Belongs to the invertebrate defensin family. Type 1 subfamily. The disulfide bonds are essential for antimicrobial activity. Larval fat body, hemolymph and salivary glands (at protein level). Expressed in the salivary glands of all larval stages.

It localises to the secreted. Its subcellular location is the host cell membrane. In terms of biological role, shows strong antibacterial activity against numerous Gram-positive bacteria. It selectively inhibits peptidoglycan biosynthesis through complex formation with the cell wall precursor lipid II (1:1 molar ratio) thus inhibiting cell wall synthesis. Shows antibacterial activity against the Gram-positive bacteria M.luteus, E.fecalis (MIC=32 mg/L), S.aureus (MIC=16 mg/L), S.carnosus (MIC=2 mg/L), S.pneumoniae (MIC=2 mg/L) and S.pyogenes (MIC=2 mg/L) and against a number of methicillin-resistant S.aureus and glycopeptide-intermediate S.aureus isolates. Does not show antibacterial activity against Gram-negative bacteria or antifungal activity against C.utilis. Shows slight antifungal activity against C.albicans. The protein is Defensin Lucifensin of Lucilia sericata (Green bottle fly).